The sequence spans 745 residues: MDWLLDVFATWLYGLKVIAITLAVIMFISGLDDFFIDVVYWVRRIKRKLSVYRRYPRMSYRELYKPDEKPLAIMVPAWNETGVIGNMAELAATTLDYENYHIFVGTYPNDPDTQRDVDEVCARFPNVHKVVCARPGPTSKADCLNNVLDAITQFERSANFAFAGFILHDAEDVISPMELRLFNYLVERKDLIQIPVYPFEREWTHFTSMTYIDEFSELHGKDVPVREALAGQVPSAGVGTCFSRRAVTALLADGDGIAFDVQSLTEDYDIGFRLKEKGMTEIFVRFPVVDEAKEREQRKFLQHARTSNMICVREYFPDTFSTAVRQKSRWIIGIVFQGFKTHKWTSSLTLNYFLWRDRKGAISNFVSFLAMLVMIQLLLLLAYESLWPDAWHFLSIFSGSAWLMTLLWLNFGLMVNRIVQRVIFVTGYYGLTQGLLSVLRLFWGNLINFMANWRALKQVLQHGDPRRVAWDKTTHDFPSVTGDTRSLRPLGQILLENQVITEEQLDTALRNRVEGLRLGGSMLMQGLISAEQLAQALAEQNGVAWESIDAWQIPSSLIAEMPASVALHYAVLPLRLENDELIVGSEDGIDPVSLAALTRKVGRKVRYVIVLRGQIVTGLRHWYARRRGHDPRAMLYNAVQHQWLTEQQAGEIWRQYVPHQFLFAEILTTLGHINRSAINVLLLRHERSSLPLGKFLVTEGVISQETLDRVLTIQRELQVSMQSLLLKAGLNTEQVAQLESENEGE.

Helical transmembrane passes span 8–28, 362–382, and 393–413; these read FATW…IMFI, ISNF…LLLA, and FLSI…NFGL.

Its subcellular location is the cell inner membrane. Functionally, required for bacteriophage N4 adsorption. May be a component of the phage receptor. In Escherichia coli O157:H7, this protein is Bacteriophage N4 adsorption protein B (nfrB).